Consider the following 299-residue polypeptide: Very long chain fatty acid elongase 5 (299 aa).

Met1 carries the N-acetylmethionine modification. 7 helical membrane-spanning segments follow: residues 26 to 46 (WFLL…LLIV), 64 to 84 (ILVV…CELV), 112 to 132 (VLWW…FFIL), 139 to 158 (ITVL…WFVM), 168 to 187 (FGAT…YGLS), 205 to 225 (GQLL…IWPC), and 226 to 246 (TFPL…ITLF). The residue at position 285 (Ser285) is a Phosphoserine.

The protein belongs to the ELO family. ELOVL5 subfamily. In terms of assembly, interacts with TECR.

It localises to the endoplasmic reticulum membrane. The protein resides in the cell projection. The protein localises to the dendrite. It catalyses the reaction a very-long-chain acyl-CoA + malonyl-CoA + H(+) = a very-long-chain 3-oxoacyl-CoA + CO2 + CoA. The enzyme catalyses (6Z,9Z,12Z)-octadecatrienoyl-CoA + malonyl-CoA + H(+) = (8Z,11Z,14Z)-3-oxoeicosatrienoyl-CoA + CO2 + CoA. The catalysed reaction is (9Z,12Z,15Z)-octadecatrienoyl-CoA + malonyl-CoA + H(+) = (11Z,14Z,17Z)-3-oxoeicosatrienoyl-CoA + CO2 + CoA. It carries out the reaction (9Z)-hexadecenoyl-CoA + malonyl-CoA + H(+) = 3-oxo-(11Z)-octadecenoyl-CoA + CO2 + CoA. It catalyses the reaction (9Z)-octadecenoyl-CoA + malonyl-CoA + H(+) = 3-oxo-(11Z)-eicosenoyl-CoA + CO2 + CoA. The enzyme catalyses (11Z)-octadecenoyl-CoA + malonyl-CoA + H(+) = 3-oxo-(13Z)-eicosenoyl-CoA + CO2 + CoA. The catalysed reaction is (9Z,12Z)-octadecadienoyl-CoA + malonyl-CoA + H(+) = (11Z,14Z)-3-oxoicosa-11,14-dienoyl-CoA + CO2 + CoA. It carries out the reaction (6Z,9Z,12Z,15Z)-octadecatetraenoyl-CoA + malonyl-CoA + H(+) = (8Z,11Z,14Z,17Z)-3-oxoicosatetraenoyl-CoA + CO2 + CoA. It catalyses the reaction (5Z,8Z,11Z,14Z)-eicosatetraenoyl-CoA + malonyl-CoA + H(+) = (7Z,10Z,13Z,16Z)-3-oxodocosatetraenoyl-CoA + CO2 + CoA. The enzyme catalyses (5Z,8Z,11Z,14Z,17Z)-eicosapentaenoyl-CoA + malonyl-CoA + H(+) = 3-oxo-(7Z,10Z,13Z,16Z,19Z)-docosapentaenoyl-CoA + CO2 + CoA. The protein operates within lipid metabolism; polyunsaturated fatty acid biosynthesis. Functionally, catalyzes the first and rate-limiting reaction of the four reactions that constitute the long-chain fatty acids elongation cycle. This endoplasmic reticulum-bound enzymatic process allows the addition of 2 carbons to the chain of long- and very long-chain fatty acids (VLCFAs) per cycle. Condensing enzyme that acts specifically toward polyunsaturated acyl-CoA with the higher activity toward C18:3(n-6) acyl-CoA. May participate in the production of monounsaturated and of polyunsaturated VLCFAs of different chain lengths that are involved in multiple biological processes as precursors of membrane lipids and lipid mediators. In conditions where the essential linoleic and alpha linoleic fatty acids are lacking it is also involved in the synthesis of Mead acid from oleic acid. This chain is Very long chain fatty acid elongase 5, found in Bos taurus (Bovine).